Consider the following 316-residue polypeptide: Ornithine carbamoyltransferase (316 aa).

Carbamoyl phosphate contacts are provided by residues 57–60 (STRT), Gln84, Arg108, and 135–138 (HPCQ). L-ornithine-binding positions include Asn166, Asp230, and 234–235 (SM). Residues 269–270 (CL) and Arg297 contribute to the carbamoyl phosphate site.

It belongs to the aspartate/ornithine carbamoyltransferase superfamily. OTCase family.

It is found in the cytoplasm. The catalysed reaction is carbamoyl phosphate + L-ornithine = L-citrulline + phosphate + H(+). The protein operates within amino-acid degradation; L-arginine degradation via ADI pathway; carbamoyl phosphate from L-arginine: step 2/2. Its function is as follows. Reversibly catalyzes the transfer of the carbamoyl group from carbamoyl phosphate (CP) to the N(epsilon) atom of ornithine (ORN) to produce L-citrulline. This is Ornithine carbamoyltransferase from Bacillus cereus (strain AH187).